The primary structure comprises 315 residues: Shiga-like toxin 1 subunit A (315 aa).

The signal sequence occupies residues Met-1–Ala-22. The interval Lys-23–Arg-273 is A1. Glu-189 is an active-site residue. A disulfide bridge connects residues Cys-264 and Cys-283. Residues Met-274 to Ser-315 are A2.

The protein belongs to the ribosome-inactivating protein family. As to quaternary structure, shiga-like toxin contains a single subunit A and five copies of subunit B.

It localises to the secreted. The catalysed reaction is Endohydrolysis of the N-glycosidic bond at one specific adenosine on the 28S rRNA.. The A subunit is responsible for inhibiting protein synthesis through the catalytic inactivation of 60S ribosomal subunits. After endocytosis, the A subunit is cleaved by furin in two fragments, A1 and A2: A1 is the catalytically active fragment, and A2 is essential for holotoxin assembly with the B subunits. In Escherichia coli (Bacteriophage H19B), this protein is Shiga-like toxin 1 subunit A (stxA).